A 251-amino-acid chain; its full sequence is uncharacterized protein (251 aa).

The protein belongs to the methyltransferase superfamily.

Its subcellular location is the cytoplasm. The protein localises to the nucleus. Its function is as follows. Probable methyltransferase. This is an uncharacterized protein from Schizosaccharomyces pombe (strain 972 / ATCC 24843) (Fission yeast).